A 112-amino-acid polypeptide reads, in one-letter code: Cytoplasmic envelopment protein 3 (112 aa).

Residue G2 is the site of N-myristoyl glycine; by host attachment. The interval 84–112 (GANKGGGKRTSSLKSAKNGAGVKKKVRAL) is disordered.

This sequence belongs to the herpesviridae cytoplasmic envelopment protein 3 family. As to quaternary structure, interacts with cytoplasmic envelopment protein 2; this interaction is essential for the proper localization of each protein to the assembly complex and thus for the production of infectious virus. Myristoylation and palmitoylation (probably on one or more of the nearby cysteines at the N-terminus) enable membrane-binding and Golgi apparatus-specific targeting and are essential for efficient packaging. In terms of processing, phosphorylated. Phosphorylation does not seem to be required for recycling to the host Golgi apparatus. Packaging is selective for underphosphorylated forms.

Its subcellular location is the virion tegument. The protein resides in the virion membrane. It localises to the host cell membrane. The protein localises to the host Golgi apparatus membrane. Plays an important role in the cytoplasmic envelopment of tegument proteins and capsids during the assembly and egress processes. Also participates in viral entry at the fusion step probably by regulating the core fusion machinery. This is Cytoplasmic envelopment protein 3 (UL99) from Murid herpesvirus 1 (strain K181) (MuHV-1).